A 136-amino-acid chain; its full sequence is uncharacterized protein (136 aa).

Residues 14–34 traverse the membrane as a helical segment; sequence ASVFAFFVLFLFCLKIILVLF.

It is found in the membrane. This is an uncharacterized protein from Mycoplasma genitalium (strain ATCC 33530 / DSM 19775 / NCTC 10195 / G37) (Mycoplasmoides genitalium).